A 680-amino-acid polypeptide reads, in one-letter code: Methionine--tRNA ligase (680 aa).

The 'HIGH' region signature appears at 15–25 (PYANGPVHIGH). Zn(2+) contacts are provided by Cys147, Cys150, Cys160, and Cys163. The short motif at 332–336 (KISTS) is the 'KMSKS' region element. Thr335 lines the ATP pocket. One can recognise a tRNA-binding domain in the interval 578-680 (EFEKLDIRVG…REVKPGSEVK (103 aa)).

The protein belongs to the class-I aminoacyl-tRNA synthetase family. MetG type 1 subfamily. As to quaternary structure, homodimer. Requires Zn(2+) as cofactor.

It is found in the cytoplasm. The enzyme catalyses tRNA(Met) + L-methionine + ATP = L-methionyl-tRNA(Met) + AMP + diphosphate. Functionally, is required not only for elongation of protein synthesis but also for the initiation of all mRNA translation through initiator tRNA(fMet) aminoacylation. The protein is Methionine--tRNA ligase of Phocaeicola vulgatus (strain ATCC 8482 / DSM 1447 / JCM 5826 / CCUG 4940 / NBRC 14291 / NCTC 11154) (Bacteroides vulgatus).